Reading from the N-terminus, the 633-residue chain is Peptidoglycan D,D-transpeptidase MrdA (633 aa).

The chain crosses the membrane as a helical span at residues 22–42 (LVAFLGILLLTGVLIANLYNL). Ser-330 acts as the Acyl-ester intermediate in catalysis.

This sequence belongs to the transpeptidase family. MrdA subfamily.

The protein resides in the cell inner membrane. The enzyme catalyses Preferential cleavage: (Ac)2-L-Lys-D-Ala-|-D-Ala. Also transpeptidation of peptidyl-alanyl moieties that are N-acyl substituents of D-alanine.. It functions in the pathway cell wall biogenesis; peptidoglycan biosynthesis. Functionally, catalyzes cross-linking of the peptidoglycan cell wall. This is Peptidoglycan D,D-transpeptidase MrdA from Escherichia coli O157:H7.